Here is a 500-residue protein sequence, read N- to C-terminus: Flt3-interacting zinc finger protein 1 (500 aa).

M1 bears the N-acetylmethionine mark. Positions M1–A24 are disordered. Positions V9–A19 are enriched in pro residues. 6 C2H2-type zinc fingers span residues F29 to H51, H57 to H79, Y85 to H107, Y113 to H136, F204 to H226, and F232 to H254. 2 disordered regions span residues D255 to V284 and K306 to E328. Residues L256–W267 show a composition bias toward polar residues. C2H2-type zinc fingers lie at residues Y336 to H357, Y363 to H386, F418 to H440, F446 to H468, and F474 to H496. The tract at residues R383 to K415 is disordered.

In terms of assembly, interacts with FLT3 cytoplasmic catalytic domain, following receptor stimulation, in a kinase-independent manner. Does not interact with other structurally related receptor tyrosine kinases, including KIT, CSF1R and PDGFR. Interacts with NRL. As to expression, widely expressed. In the retina, highest expression in the ganglion cell layer.

The protein localises to the cytoplasm. It is found in the nucleus. May be a transcriptional repressor of NRL function in photoreceptors. Does not repress CRX-mediated transactivation. This chain is Flt3-interacting zinc finger protein 1 (Fiz1), found in Mus musculus (Mouse).